The sequence spans 208 residues: Translation initiation factor IF-3 (208 aa).

This sequence belongs to the IF-3 family. In terms of assembly, monomer.

Its subcellular location is the cytoplasm. IF-3 binds to the 30S ribosomal subunit and shifts the equilibrium between 70S ribosomes and their 50S and 30S subunits in favor of the free subunits, thus enhancing the availability of 30S subunits on which protein synthesis initiation begins. The polypeptide is Translation initiation factor IF-3 (Parabacteroides distasonis (strain ATCC 8503 / DSM 20701 / CIP 104284 / JCM 5825 / NCTC 11152)).